A 69-amino-acid polypeptide reads, in one-letter code: uncharacterized protein (69 aa).

This is an uncharacterized protein from Lepidoptera (butterflies and moths).